A 264-amino-acid chain; its full sequence is Thymidylate synthase (264 aa).

Arginine 21 is a dUMP binding site. Histidine 51 is a binding site for (6R)-5,10-methylene-5,6,7,8-tetrahydrofolate. 126 to 127 (RR) provides a ligand contact to dUMP. Residue cysteine 146 is the Nucleophile of the active site. DUMP contacts are provided by residues 166–169 (RSCD), asparagine 177, and 207–209 (HLY). Aspartate 169 provides a ligand contact to (6R)-5,10-methylene-5,6,7,8-tetrahydrofolate. (6R)-5,10-methylene-5,6,7,8-tetrahydrofolate is bound at residue alanine 263.

It belongs to the thymidylate synthase family. Bacterial-type ThyA subfamily. In terms of assembly, homodimer.

It localises to the cytoplasm. It catalyses the reaction dUMP + (6R)-5,10-methylene-5,6,7,8-tetrahydrofolate = 7,8-dihydrofolate + dTMP. Its pathway is pyrimidine metabolism; dTTP biosynthesis. Catalyzes the reductive methylation of 2'-deoxyuridine-5'-monophosphate (dUMP) to 2'-deoxythymidine-5'-monophosphate (dTMP) while utilizing 5,10-methylenetetrahydrofolate (mTHF) as the methyl donor and reductant in the reaction, yielding dihydrofolate (DHF) as a by-product. This enzymatic reaction provides an intracellular de novo source of dTMP, an essential precursor for DNA biosynthesis. The sequence is that of Thymidylate synthase from Shigella dysenteriae serotype 1 (strain Sd197).